Here is a 226-residue protein sequence, read N- to C-terminus: 3-isopropylmalate dehydratase small subunit (226 aa).

Residues 204–226 (EAETVESAREPEAVEWAGPLADR) are disordered.

Belongs to the LeuD family. LeuD type 1 subfamily. Heterodimer of LeuC and LeuD.

It catalyses the reaction (2R,3S)-3-isopropylmalate = (2S)-2-isopropylmalate. The protein operates within amino-acid biosynthesis; L-leucine biosynthesis; L-leucine from 3-methyl-2-oxobutanoate: step 2/4. Functionally, catalyzes the isomerization between 2-isopropylmalate and 3-isopropylmalate, via the formation of 2-isopropylmaleate. The polypeptide is 3-isopropylmalate dehydratase small subunit (Bifidobacterium animalis subsp. lactis (strain AD011)).